Consider the following 561-residue polypeptide: Putative transport protein YbjL (561 aa).

Transmembrane regions (helical) follow at residues 8–28 (LLNGNYILLLFVVLALGLCLG), 32–52 (LGSVQLGNSIGVLVVSLLLGQ), 66–86 (FMLFIFCVGVEAGPNFFSIFF), 94–114 (MLALVMVGSALLIALGLGKLF), and 158–178 (NLSLGYALTYLIGLVSLIVGA). RCK C-terminal domains are found at residues 200-288 (RGLD…SFRN) and 292-373 (VFDR…RIGF). 5 helical membrane-spanning segments follow: residues 383 to 403 (LLAFCAFFIIGLMIGMITFQF), 406 to 426 (FSFGIGNAAGLLFAGIMLGFL), 447 to 467 (FGLMVFMAGVGLSAGSGISNG), 475 to 495 (MLIAGLVVSLIPVVICFLFGA), and 540 to 560 (AIANVLLTLAGTLIVIIWPGL).

Belongs to the AAE transporter (TC 2.A.81) family. YbjL subfamily.

It is found in the cell membrane. The polypeptide is Putative transport protein YbjL (Salmonella typhi).